The following is a 78-amino-acid chain: Probable [Fe-S]-dependent transcriptional repressor (78 aa).

Positions 56, 61, 64, and 70 each coordinate iron-sulfur cluster.

Belongs to the FeoC family.

May function as a transcriptional regulator that controls feoABC expression. This is Probable [Fe-S]-dependent transcriptional repressor from Escherichia coli O9:H4 (strain HS).